The sequence spans 200 residues: Recombination protein RecR (200 aa).

The segment at Cys-60–Cys-75 adopts a C4-type zinc-finger fold. Residues Thr-83 to Pro-177 enclose the Toprim domain.

The protein belongs to the RecR family.

May play a role in DNA repair. It seems to be involved in an RecBC-independent recombinational process of DNA repair. It may act with RecF and RecO. The sequence is that of Recombination protein RecR from Francisella tularensis subsp. tularensis (strain SCHU S4 / Schu 4).